The following is a 505-amino-acid chain: Flagellin (505 aa).

It belongs to the bacterial flagellin family.

The protein resides in the secreted. It localises to the bacterial flagellum. Functionally, flagellin is the subunit protein which polymerizes to form the filaments of bacterial flagella. The protein is Flagellin (fliC) of Salmonella senftenberg.